The primary structure comprises 323 residues: Beta-ketoacyl-[acyl-carrier-protein] synthase III (323 aa).

Catalysis depends on residues C113 and H250. The tract at residues Q251–R255 is ACP-binding. The active site involves N280.

Belongs to the thiolase-like superfamily. FabH family. As to quaternary structure, homodimer.

The protein resides in the cytoplasm. It carries out the reaction malonyl-[ACP] + acetyl-CoA + H(+) = 3-oxobutanoyl-[ACP] + CO2 + CoA. It functions in the pathway lipid metabolism; fatty acid biosynthesis. Functionally, catalyzes the condensation reaction of fatty acid synthesis by the addition to an acyl acceptor of two carbons from malonyl-ACP. Catalyzes the first condensation reaction which initiates fatty acid synthesis and may therefore play a role in governing the total rate of fatty acid production. Possesses both acetoacetyl-ACP synthase and acetyl transacylase activities. Its substrate specificity determines the biosynthesis of branched-chain and/or straight-chain of fatty acids. This is Beta-ketoacyl-[acyl-carrier-protein] synthase III from Rhizobium rhizogenes (strain K84 / ATCC BAA-868) (Agrobacterium radiobacter).